The chain runs to 391 residues: Elongation factor Tu (391 aa).

The 192-residue stretch at 10 to 201 (KPHVNIGTIG…AVDEYIPTPA (192 aa)) folds into the tr-type G domain. A G1 region spans residues 19–26 (GHVDHGKT). A GTP-binding site is contributed by 19–26 (GHVDHGKT). Mg(2+) is bound at residue Thr26. The segment at 55–59 (GITIS) is G2. A G3 region spans residues 76–79 (DCPG). Residues 76–80 (DCPGH) and 131–134 (NKVD) contribute to the GTP site. The interval 131 to 134 (NKVD) is G4. The interval 169 to 171 (SAL) is G5.

Belongs to the TRAFAC class translation factor GTPase superfamily. Classic translation factor GTPase family. EF-Tu/EF-1A subfamily. In terms of assembly, monomer.

It localises to the cytoplasm. It catalyses the reaction GTP + H2O = GDP + phosphate + H(+). In terms of biological role, GTP hydrolase that promotes the GTP-dependent binding of aminoacyl-tRNA to the A-site of ribosomes during protein biosynthesis. The polypeptide is Elongation factor Tu (Jannaschia sp. (strain CCS1)).